The primary structure comprises 82 residues: Putative antitoxin VapB23 (82 aa).

Its function is as follows. Putative antitoxin component of a possible type II toxin-antitoxin (TA) system. The cognate toxin is VapC23. This chain is Putative antitoxin VapB23 (vapB23), found in Mycobacterium tuberculosis (strain ATCC 25618 / H37Rv).